We begin with the raw amino-acid sequence, 320 residues long: Ribosome production factor 2 homolog (320 aa).

Residues arginine 30 to aspartate 234 form the Brix domain. Residues leucine 268–serine 320 form a disordered region. Over residues leucine 302–alanine 311 the composition is skewed to low complexity.

Belongs to the RPF2 family.

It localises to the nucleus. It is found in the nucleolus. Functionally, required for normal assembly of the mitotic spindle. May be involved in both centrosome-dependent and centrosome-independent spindle assembly programs. The sequence is that of Ribosome production factor 2 homolog from Drosophila melanogaster (Fruit fly).